Here is a 431-residue protein sequence, read N- to C-terminus: Asparagine--tRNA ligase (431 aa).

The protein belongs to the class-II aminoacyl-tRNA synthetase family.

It localises to the cytoplasm. It catalyses the reaction tRNA(Asn) + L-asparagine + ATP = L-asparaginyl-tRNA(Asn) + AMP + diphosphate + H(+). The chain is Asparagine--tRNA ligase from Thermococcus kodakarensis (strain ATCC BAA-918 / JCM 12380 / KOD1) (Pyrococcus kodakaraensis (strain KOD1)).